A 343-amino-acid polypeptide reads, in one-letter code: L-threonine 3-dehydrogenase (343 aa).

C38 contacts Zn(2+). Residues T40 and H43 each act as charge relay system in the active site. The Zn(2+) site is built by H63, E64, C93, C96, C99, and C107. Residues I176, D196, R201, 261 to 263, and 286 to 288 each bind NAD(+); these read LGI and IAG.

The protein belongs to the zinc-containing alcohol dehydrogenase family. In terms of assembly, homotetramer. Requires Zn(2+) as cofactor.

Its subcellular location is the cytoplasm. The catalysed reaction is L-threonine + NAD(+) = (2S)-2-amino-3-oxobutanoate + NADH + H(+). It participates in amino-acid degradation; L-threonine degradation via oxydo-reductase pathway; glycine from L-threonine: step 1/2. Catalyzes the NAD(+)-dependent oxidation of L-threonine to 2-amino-3-ketobutyrate. The protein is L-threonine 3-dehydrogenase of Thermus thermophilus (strain ATCC 27634 / DSM 579 / HB8).